We begin with the raw amino-acid sequence, 204 residues long: HTH-type transcriptional repressor KstR2 (204 aa).

The HTH tetR-type domain occupies 13–73 (SGRRTELLDI…EILRGFLDDL (61 aa)). Positions 36–55 (TVRDIADAAGILSGSLYHHF) form a DNA-binding region, H-T-H motif.

In terms of assembly, homodimer.

Functionally, controls the expression of a small regulon that may play a role in the utilization of cholesterol. The sequence is that of HTH-type transcriptional repressor KstR2 (kstR2) from Rhodococcus jostii (strain RHA1).